The following is a 181-amino-acid chain: Der GTPase-activating protein YihI (181 aa).

The disordered stretch occupies residues 1–73 (MSRIKKARKP…DPRIGSKKPI (73 aa)). The segment covering 22–32 (NRTDRDVESRE) has biased composition (basic and acidic residues). Basic residues predominate over residues 33–42 (LKRKRKRKGL). Over residues 55 to 67 (QARRNAQKKDPRI) the composition is skewed to basic and acidic residues.

This sequence belongs to the YihI family. As to quaternary structure, interacts with Der.

Its function is as follows. A GTPase-activating protein (GAP) that modifies Der/EngA GTPase function. May play a role in ribosome biogenesis. In Aliivibrio fischeri (strain MJ11) (Vibrio fischeri), this protein is Der GTPase-activating protein YihI.